The chain runs to 250 residues: Aquaporin TIP1-1 (250 aa).

The next 2 membrane-spanning stretches (helical) occupy residues 24–44 (FAEF…GMAF) and 56–76 (AGLI…VSVG). An NPA 1 motif is present at residues 85–87 (NPA). Transmembrane regions (helical) follow at residues 104–126 (LLYW…FSTG), 143–163 (ALVL…ATAV), and 172–192 (TIAP…GGAF). Residues 198–200 (NPA) carry the NPA 2 motif. Residues 218–238 (YWVGPLIGGGLAGVIYELLFI) form a helical membrane-spanning segment.

This sequence belongs to the MIP/aquaporin (TC 1.A.8) family. TIP (TC 1.A.8.10) subfamily. As to expression, expressed in roots, shoots, leaves, tassels, ears and embryos. Expressed in meristems and zones of cell enlargement: tips of primary and lateral roots, leaf primordia, and male and female inflorescence meristems. Highly expressed in the root epidermis and endodermis, parenchyma cells surrounding mature xylem vessels in the root and the stem, phloem companion cells and a ring of cells around the phloem strand in the stem and the leaf sheath, and the basal endosperm transfer cells in developing kernels.

The protein resides in the vacuole membrane. In terms of biological role, water channel required to facilitate the transport of water across cell membrane. May support the rapid influx of water into vacuoles during cell expansion, permit osmotic equilibration between the cytosol and the vacuolar content and rapid transcellular water flow through living cells. Its function is impaired by Hg(2+). The protein is Aquaporin TIP1-1 (TIP1-1) of Zea mays (Maize).